We begin with the raw amino-acid sequence, 365 residues long: Probable 7-methylxanthine methyltransferase 4 (365 aa).

Y18 lines the S-adenosyl-L-homocysteine pocket. Theobromine is bound at residue T25. Positions 62, 67, 99, 100, 132, and 133 each coordinate S-adenosyl-L-homocysteine. Theobromine contacts are provided by Y150, H153, and W154. Mg(2+) is bound by residues N170, D256, F258, and N259. A theobromine-binding site is contributed by F311.

Belongs to the methyltransferase superfamily. Type-7 methyltransferase family. Requires Mg(2+) as cofactor.

It catalyses the reaction 7-methylxanthine + S-adenosyl-L-methionine = theobromine + S-adenosyl-L-homocysteine + H(+). Its pathway is alkaloid biosynthesis. Involved in the biosynthesis of theobromine. This Theobroma cacao (Cacao) protein is Probable 7-methylxanthine methyltransferase 4.